A 191-amino-acid chain; its full sequence is MTEPKRGRVQWDEANIVEIESNKPVRQKITEPKTPYHPMMDDDGSLSPRGRAFDECVDDMQRAEELRNVLNDAAASSSRNSSQGSGGGGWSSSDEEEEEADPMDQDEEGSGSGKNERFNAHRKAHYDEFRKVKELRSSGSFYEEEEEEDDGAKGSKSETTTNSRHTKGGNKELDATKTVSGTSSSSSPELI.

The segment covering 20 to 31 (ESNKPVRQKITE) has biased composition (basic and acidic residues). Disordered stretches follow at residues 20 to 52 (ESNKPVRQKITEPKTPYHPMMDDDGSLSPRGRA) and 67 to 191 (RNVL…PELI). Phosphoserine is present on residues serine 45 and serine 47. Acidic residues predominate over residues 93–109 (SDEEEEEADPMDQDEEG). Over residues 114–136 (KNERFNAHRKAHYDEFRKVKELR) the composition is skewed to basic and acidic residues.

Interacts with protein phosphatase 1. Interacts with TOPP1, SRK2D/SNRK2.2, SRK2I/SNRK2.3, SRK2E/SNRK2.6, SRK2C/SNRK2.8 and PYL11. Phosphorylated in vivo. In terms of tissue distribution, expressed in roots, cotyledons, leaves, flowers and siliques.

It localises to the nucleus. The protein resides in the cytoplasm. Functionally, inhibitor of protein-phosphatase 1 (PP1). Binds to and inhibits PP1 activity. Acts as negative regulator of abscisic acid (ABA) signaling. Enhances the inhibition of SRK2E/SNRK2.6 by TOPP1. May promote the interaction between TOPP1 and the ABA receptor PYL11. The chain is Protein phosphatase inhibitor 2 from Arabidopsis thaliana (Mouse-ear cress).